Reading from the N-terminus, the 234-residue chain is Carboxy-S-adenosyl-L-methionine synthase (234 aa).

Residues Tyr35, 60–62 (GCS), 109–110 (DI), Asn124, and Arg191 contribute to the S-adenosyl-L-methionine site.

Belongs to the class I-like SAM-binding methyltransferase superfamily. Cx-SAM synthase family. As to quaternary structure, homodimer.

The catalysed reaction is prephenate + S-adenosyl-L-methionine = carboxy-S-adenosyl-L-methionine + 3-phenylpyruvate + H2O. Catalyzes the conversion of S-adenosyl-L-methionine (SAM) to carboxy-S-adenosyl-L-methionine (Cx-SAM). This chain is Carboxy-S-adenosyl-L-methionine synthase, found in Campylobacter fetus subsp. fetus (strain 82-40).